The sequence spans 277 residues: Large ribosomal subunit protein uL2 (277 aa).

The tract at residues 226 to 277 (NPIDHPHGGGEGRTSGGRHPVTPWGKPTKGKKTRSNKSTNKFILISRHKRKK) is disordered.

The protein belongs to the universal ribosomal protein uL2 family. Part of the 50S ribosomal subunit. Forms a bridge to the 30S subunit in the 70S ribosome.

Functionally, one of the primary rRNA binding proteins. Required for association of the 30S and 50S subunits to form the 70S ribosome, for tRNA binding and peptide bond formation. It has been suggested to have peptidyltransferase activity; this is somewhat controversial. Makes several contacts with the 16S rRNA in the 70S ribosome. The sequence is that of Large ribosomal subunit protein uL2 from Rhodopseudomonas palustris (strain BisA53).